Reading from the N-terminus, the 599-residue chain is Purine-uracil permease NCS1 (599 aa).

A run of 12 helical transmembrane segments spans residues 140 to 160 (LWIGLVVGVPTYYLAGSLVDL), 164 to 184 (WWQGIATVVTANLILLVPLVL), 218 to 238 (LVGCGWYGIETWIGGEAIFLL), 257 to 277 (TSPLEFSCFIVFWLAQLCIVW), 293 to 313 (ILISLTSCLLAWSYLKAGGFG), 327 to 347 (FWTLFFPSLTANISFWATLAL), 363 to 383 (IIGQVGLPVFMGLFTFVGVAV), 411 to 433 (TLLAIVGISLATLTTNIAANVVA), 445 to 465 (FFTFGRGAFLTAVLGIVFQPW), 474 to 494 (FVYTWLIGYSALLGPIGGIIL), 525 to 545 (YNVAAVVALVAGIIPVVPGFL), and 560 to 580 (VVYDNALFFSFIIAGFVYWII).

It belongs to the purine-cytosine permease (2.A.39) family. In terms of tissue distribution, expressed in roots, leaves, stems, flowers, siliques and seeds.

The protein resides in the plastid. The protein localises to the chloroplast envelope. It is found in the chloroplast membrane. In terms of biological role, nucleobase-proton symporter that facilitates the uptake of nucleobases in the cells. Can transport adenine, guanine and uracil. Contributes to uracil import into plastids for plastidic uracil salvage which is essential for plant growth and development. The protein is Purine-uracil permease NCS1 of Arabidopsis thaliana (Mouse-ear cress).